The following is a 166-amino-acid chain: Endoribonuclease YbeY (166 aa).

Zn(2+)-binding residues include H130, H134, and H140.

This sequence belongs to the endoribonuclease YbeY family. Zn(2+) is required as a cofactor.

Its subcellular location is the cytoplasm. In terms of biological role, single strand-specific metallo-endoribonuclease involved in late-stage 70S ribosome quality control and in maturation of the 3' terminus of the 16S rRNA. The sequence is that of Endoribonuclease YbeY from Streptococcus uberis (strain ATCC BAA-854 / 0140J).